The sequence spans 207 residues: Histone H1 (207 aa).

Low complexity predominate over residues methionine 1–lysine 15. 2 disordered regions span residues methionine 1–alanine 28 and glutamate 105–lysine 207. Position 2 is an N-acetylalanine (alanine 2). The segment covering alanine 16–lysine 27 has biased composition (basic residues). Residues alanine 28–lysine 101 form the H15 domain. Basic residues-rich tracts occupy residues lysine 117–lysine 168 and lysine 175–lysine 207.

This sequence belongs to the histone H1/H5 family. Oncorhyncin II is expressed in skin.

It is found in the nucleus. The protein localises to the chromosome. The protein resides in the secreted. In terms of biological role, histones H1 are necessary for the condensation of nucleosome chains into higher-order structures. Its function is as follows. Oncorhyncin II has antibacterial activity against Gram-positive and Gram-negative bacteria at submicromolar concentrations. Potentially important role in mucosal defense. The chain is Histone H1 from Oncorhynchus mykiss (Rainbow trout).